The sequence spans 558 residues: Membrane protein insertase YidC (558 aa).

6 helical membrane passes run 5 to 25, 332 to 352, 355 to 375, 429 to 449, 474 to 494, and 520 to 540; these read IINL…WQYF, AIDF…MNFF, YVGN…LLMF, LPIL…YVTI, LFGL…WPIL, and FMPL…LIYW.

Belongs to the OXA1/ALB3/YidC family. Type 1 subfamily. In terms of assembly, interacts with the Sec translocase complex via SecD. Specifically interacts with transmembrane segments of nascent integral membrane proteins during membrane integration.

It localises to the cell inner membrane. In terms of biological role, required for the insertion and/or proper folding and/or complex formation of integral membrane proteins into the membrane. Involved in integration of membrane proteins that insert both dependently and independently of the Sec translocase complex, as well as at least some lipoproteins. Aids folding of multispanning membrane proteins. This is Membrane protein insertase YidC from Rickettsia typhi (strain ATCC VR-144 / Wilmington).